The chain runs to 1024 residues: Beta-galactosidase 2 (1024 aa).

2 residues coordinate substrate: Asn-103 and Asp-202. Asp-202 contributes to the Na(+) binding site. Mg(2+)-binding residues include Glu-417, His-419, and Glu-462. Residues Glu-462 and 538-541 (EYAH) contribute to the substrate site. The active-site Proton donor is Glu-462. Residue Glu-538 is the Nucleophile of the active site. Position 598 (Asn-598) interacts with Mg(2+). Na(+) contacts are provided by Phe-602 and Asn-605. Substrate is bound by residues Asn-605 and Trp-1000.

Belongs to the glycosyl hydrolase 2 family. Homotetramer. Mg(2+) is required as a cofactor. Na(+) serves as cofactor.

It carries out the reaction Hydrolysis of terminal non-reducing beta-D-galactose residues in beta-D-galactosides.. This Klebsiella pneumoniae subsp. pneumoniae (strain ATCC 700721 / MGH 78578) protein is Beta-galactosidase 2.